The chain runs to 120 residues: Large ribosomal subunit protein eL8 (120 aa).

This sequence belongs to the eukaryotic ribosomal protein eL8 family. In terms of assembly, part of the 50S ribosomal subunit. Probably part of the RNase P complex.

It is found in the cytoplasm. Its function is as follows. Multifunctional RNA-binding protein that recognizes the K-turn motif in ribosomal RNA, the RNA component of RNase P, box H/ACA, box C/D and box C'/D' sRNAs. The chain is Large ribosomal subunit protein eL8 from Halobacterium salinarum (strain ATCC 29341 / DSM 671 / R1).